We begin with the raw amino-acid sequence, 107 residues long: MKWIVIDTIIQPSCGISFSAIWGNMKMIIWYQSTIFLPPGSIFTPVKSGIILKDKEYPITIYNIAPFNKDLWSLLKSSQECPPGESKITNKCLHNSCIIKICPYGLK.

Belongs to the IraM/RssC family.

Its subcellular location is the cytoplasm. In terms of biological role, inhibits RpoS proteolysis by regulating RssB activity, thereby increasing the stability of the sigma stress factor RpoS during magnesium starvation. This Escherichia coli (strain 55989 / EAEC) protein is Anti-adapter protein IraM.